The primary structure comprises 93 residues: Large ribosomal subunit protein uL23cz/uL23cy (93 aa).

This sequence belongs to the universal ribosomal protein uL23 family. As to quaternary structure, part of the 50S ribosomal subunit.

It is found in the plastid. Its subcellular location is the chloroplast. In terms of biological role, binds to 23S rRNA. This chain is Large ribosomal subunit protein uL23cz/uL23cy (rpl23-A), found in Platanus occidentalis (Sycamore).